A 316-amino-acid chain; its full sequence is Protein lifeguard 2 (316 aa).

The interval Met1 to Pro53 is disordered. A run of 3 helical transmembrane segments spans residues Val106–Phe126, Pro138–Cys158, and Phe165–Met185. N-linked (GlcNAc...) asparagine glycosylation is present at Asn191. 4 consecutive transmembrane segments (helical) span residues Ser194–Phe214, Gly225–Leu245, Val250–Ala270, and Ile290–Leu310.

This sequence belongs to the BI1 family. LFG subfamily. In terms of assembly, interacts with FAS/TNFRSF6 and BAX. In terms of tissue distribution, highly expressed in breast carcinoma tissues. Enhanced expression correlates with the grade of the tumor (grade II/grade III) in primary breast tumors (at protein level). Widely expressed. Expressed at high levels in the brain especially in the hippocampus.

It localises to the cell membrane. The protein localises to the membrane raft. Its subcellular location is the postsynaptic cell membrane. Antiapoptotic protein which protects cells uniquely from Fas-induced apoptosis. Regulates Fas-mediated apoptosis in neurons by interfering with caspase-8 activation. May play a role in cerebellar development by affecting cerebellar size, internal granular layer (IGL) thickness, and Purkinje cell (PC) development. The protein is Protein lifeguard 2 (FAIM2) of Homo sapiens (Human).